A 508-amino-acid chain; its full sequence is Photosystem II CP47 reaction center protein (508 aa).

6 helical membrane passes run alanine 21 to serine 36, isoleucine 101 to tryptophan 115, glycine 140 to phenylalanine 156, isoleucine 203 to serine 218, valine 237 to valine 252, and serine 457 to arginine 472.

Belongs to the PsbB/PsbC family. PsbB subfamily. In terms of assembly, PSII is composed of 1 copy each of membrane proteins PsbA, PsbB, PsbC, PsbD, PsbE, PsbF, PsbH, PsbI, PsbJ, PsbK, PsbL, PsbM, PsbT, PsbX, PsbY, PsbZ, Psb30/Ycf12, at least 3 peripheral proteins of the oxygen-evolving complex and a large number of cofactors. It forms dimeric complexes. Interacts with PAM68. Interacts with HHL1. The cofactor is Binds multiple chlorophylls. PSII binds additional chlorophylls, carotenoids and specific lipids..

The protein resides in the plastid. Its subcellular location is the chloroplast thylakoid membrane. One of the components of the core complex of photosystem II (PSII). It binds chlorophyll and helps catalyze the primary light-induced photochemical processes of PSII. PSII is a light-driven water:plastoquinone oxidoreductase, using light energy to abstract electrons from H(2)O, generating O(2) and a proton gradient subsequently used for ATP formation. The polypeptide is Photosystem II CP47 reaction center protein (Arabidopsis thaliana (Mouse-ear cress)).